Consider the following 332-residue polypeptide: Transcription factor HBP-1b(c38) (332 aa).

Residues 1–48 are disordered; sequence MAEASPRTETSTDDTDENLMLEPGNAALAVVSDSSDRSRDKNGDQKTM. Residues 34–47 show a composition bias toward basic and acidic residues; the sequence is SSDRSRDKNGDQKT. One can recognise a bZIP domain in the interval 44–107; sequence DQKTMRRLAQ…SSADQSHSMS (64 aa). The segment at 46 to 66 is basic motif; the sequence is KTMRRLAQNREAARKSRLRKK. The stretch at 47–142 forms a coiled coil; it reads TMRRLAQNRE…RAAVNAHAGD (96 aa). Positions 72–86 are leucine-zipper; it reads LENSRLKLTQLEQEL. The DOG1 domain maps to 111–329; it reads ALAFDTEYAR…RALSSLWLAR (219 aa).

This sequence belongs to the bZIP family. As to quaternary structure, binds DNA as a dimer.

The protein resides in the nucleus. Functionally, transcriptional activator that binds specifically to the DNA sequence 5'-TGACG-3'. Recognizes ocs elements like the as-1 motif of the cauliflower mosaic virus 35S promoter. Binding to the as-1-like cis elements mediate auxin- and salicylic acid-inducible transcription. Binds to the hexamer motif 5'-ACGTCA-3' of histone gene promoters. This chain is Transcription factor HBP-1b(c38), found in Triticum aestivum (Wheat).